The following is a 185-amino-acid chain: HTH-type transcriptional regulator Hpr (185 aa).

The HTH marR-type domain maps to 13–157; it reads AMIFSQRIAQ…LIAILRNIYG (145 aa). A DNA-binding region (H-T-H motif) is located at residues 63 to 86; that stretch reads ISEIAKFGVMHVSTAFNFSKKLEE.

Homodimer.

Functionally, negative regulator of protease production and sporulation. The sequence is that of HTH-type transcriptional regulator Hpr from Bacillus cytotoxicus (strain DSM 22905 / CIP 110041 / 391-98 / NVH 391-98).